The chain runs to 387 residues: Succinyl-diaminopimelate desuccinylase (387 aa).

A Zn(2+)-binding site is contributed by histidine 73. Aspartate 75 is an active-site residue. Aspartate 106 provides a ligand contact to Zn(2+). Glutamate 141 acts as the Proton acceptor in catalysis. Residues glutamate 142, glutamate 170, and histidine 359 each contribute to the Zn(2+) site.

The protein belongs to the peptidase M20A family. DapE subfamily. As to quaternary structure, homodimer. Zn(2+) is required as a cofactor. It depends on Co(2+) as a cofactor.

The enzyme catalyses N-succinyl-(2S,6S)-2,6-diaminopimelate + H2O = (2S,6S)-2,6-diaminopimelate + succinate. It participates in amino-acid biosynthesis; L-lysine biosynthesis via DAP pathway; LL-2,6-diaminopimelate from (S)-tetrahydrodipicolinate (succinylase route): step 3/3. Functionally, catalyzes the hydrolysis of N-succinyl-L,L-diaminopimelic acid (SDAP), forming succinate and LL-2,6-diaminopimelate (DAP), an intermediate involved in the bacterial biosynthesis of lysine and meso-diaminopimelic acid, an essential component of bacterial cell walls. The polypeptide is Succinyl-diaminopimelate desuccinylase (Methylorubrum populi (strain ATCC BAA-705 / NCIMB 13946 / BJ001) (Methylobacterium populi)).